Consider the following 528-residue polypeptide: Ecdysteroid UDP-glucosyltransferase (528 aa).

A signal peptide spans 1–32 (MGHLHIVHWRLTMNGAIAALFLCLVMVHQQHA).

It belongs to the UDP-glycosyltransferase family.

In terms of biological role, catalyzes the transfer of glucose from UDP-glucose to ecdysteroids which are insect molting hormones. Expression of egt interferes with normal insect development and block molting. The polypeptide is Ecdysteroid UDP-glucosyltransferase (EGT) (Mamestra brassicae nuclear polyhedrosis virus (MbNPV)).